The primary structure comprises 336 residues: Glucan endo-1,3-beta-glucosidase A (336 aa).

The N-terminal stretch at 1-23 (MAFLSSLLASLLLVGLLIQITGA) is a signal peptide. A Pyrrolidone carboxylic acid modification is found at Gln-24. Glu-118 acts as the Proton donor in catalysis. Glu-257 functions as the Nucleophile in the catalytic mechanism.

It belongs to the glycosyl hydrolase 17 family.

The protein localises to the secreted. It is found in the extracellular space. The enzyme catalyses Hydrolysis of (1-&gt;3)-beta-D-glucosidic linkages in (1-&gt;3)-beta-D-glucans.. In terms of biological role, implicated in the defense of plants against pathogens. The protein is Glucan endo-1,3-beta-glucosidase A of Solanum lycopersicum (Tomato).